The following is a 604-amino-acid chain: Elongation factor 4 (604 aa).

Positions 7–189 constitute a tr-type G domain; the sequence is KRIRNFCIIA…SVVDRVPPPA (183 aa). GTP-binding positions include 19–24 and 136–139; these read DHGKST and NKID.

Belongs to the TRAFAC class translation factor GTPase superfamily. Classic translation factor GTPase family. LepA subfamily.

The protein localises to the cell inner membrane. The catalysed reaction is GTP + H2O = GDP + phosphate + H(+). In terms of biological role, required for accurate and efficient protein synthesis under certain stress conditions. May act as a fidelity factor of the translation reaction, by catalyzing a one-codon backward translocation of tRNAs on improperly translocated ribosomes. Back-translocation proceeds from a post-translocation (POST) complex to a pre-translocation (PRE) complex, thus giving elongation factor G a second chance to translocate the tRNAs correctly. Binds to ribosomes in a GTP-dependent manner. The chain is Elongation factor 4 from Synechococcus sp. (strain CC9311).